We begin with the raw amino-acid sequence, 638 residues long: Protein NSP-INTERACTING KINASE 1 (638 aa).

The N-terminal stretch at 1–31 is a signal peptide; the sequence is MESTIVMMMMITRSFFCFLGFLCLLCSSVHG. Residues 32-248 lie on the Extracellular side of the membrane; sequence LLSPKGVNFE…AGGSRNHKMA (217 aa). Residues N92 and N103 are each glycosylated (N-linked (GlcNAc...) asparagine). LRR repeat units follow at residues 104–128, 130–152, 153–175, and 177–200; these read LTNL…IGRL, RLET…VGYL, QSLQ…SLSN, and TQLA…AAKT. Residues N162, N175, N188, N219, and N231 are each glycosylated (N-linked (GlcNAc...) asparagine). Residues 249 to 269 form a helical membrane-spanning segment; it reads IAVGSSVGTVSLIFIAVGLFL. The Cytoplasmic portion of the chain corresponds to 270–638; sequence WWRQRHNQNT…VQAMELSGPR (369 aa). At T309 the chain carries Phosphothreonine. The region spanning 312-593 is the Protein kinase domain; sequence FSSKNLLGKG…EGDGLAEKWE (282 aa). Residue 318 to 326 participates in ATP binding; that stretch reads LGKGGYGNV. At T335 the chain carries Phosphothreonine. Residue K340 coordinates ATP. Phosphoserine occurs at positions 393 and 396. Residues 422 to 502 are interaction with geminivirus NSP protein; sequence YLHEQCDPKI…DVFGFGILLL (81 aa). D435 acts as the Proton acceptor in catalysis. Phosphothreonine is present on residues T468, T469, and T474. Y482 is modified (phosphotyrosine). Residue S484 is modified to Phosphoserine. A Phosphothreonine modification is found at T485. S489 bears the Phosphoserine mark. T566 carries the phosphothreonine modification.

It belongs to the protein kinase superfamily. Ser/Thr protein kinase family. In terms of assembly, oligomer. Interacts with geminivirus nuclear shuttle protein (NSP). Interacts with RPL10A and RPL18B. In terms of processing, autophosphorylated. In terms of tissue distribution, expressed in seedlings, leaves, roots, stems and flowers.

Its subcellular location is the cell membrane. It catalyses the reaction L-seryl-[protein] + ATP = O-phospho-L-seryl-[protein] + ADP + H(+). The enzyme catalyses L-threonyl-[protein] + ATP = O-phospho-L-threonyl-[protein] + ADP + H(+). Its activity is regulated as follows. Inhibited by the viral nuclear shuttle protein (NSP) that binds to the region required for oligomerization. Its function is as follows. Involved in defense response to geminivirus and begomovirus infection via regulation of the nuclear trafficking of RPL10A. Phosphorylates RPL10A in vitro. Activation of NIK1 down-regulates cytosolic translation. The protein is Protein NSP-INTERACTING KINASE 1 of Arabidopsis thaliana (Mouse-ear cress).